The primary structure comprises 589 residues: Sulfite reductase [NADPH] hemoprotein beta-component (589 aa).

C443, C449, C488, and C492 together coordinate [4Fe-4S] cluster. Residue C492 coordinates siroheme.

Belongs to the nitrite and sulfite reductase 4Fe-4S domain family. As to quaternary structure, alpha(8)-beta(8). The alpha component is a flavoprotein, the beta component is a hemoprotein. Siroheme is required as a cofactor. The cofactor is [4Fe-4S] cluster.

It catalyses the reaction hydrogen sulfide + 3 NADP(+) + 3 H2O = sulfite + 3 NADPH + 4 H(+). Its pathway is sulfur metabolism; hydrogen sulfide biosynthesis; hydrogen sulfide from sulfite (NADPH route): step 1/1. Its function is as follows. Component of the sulfite reductase complex that catalyzes the 6-electron reduction of sulfite to sulfide. This is one of several activities required for the biosynthesis of L-cysteine from sulfate. The polypeptide is Sulfite reductase [NADPH] hemoprotein beta-component (Neisseria meningitidis serogroup C / serotype 2a (strain ATCC 700532 / DSM 15464 / FAM18)).